Here is a 337-residue protein sequence, read N- to C-terminus: Ketol-acid reductoisomerase (NADP(+)) (337 aa).

The KARI N-terminal Rossmann domain occupies 2-182 (AKIFYDNDAD…GATRAGVLLT (181 aa)). NADP(+)-binding positions include 25 to 28 (YGSQ), serine 51, serine 53, and 83 to 86 (DTSQ). Histidine 108 is an active-site residue. Glycine 134 is a binding site for NADP(+). A KARI C-terminal knotted domain is found at 183–328 (TFAEETETDL…ANLRKMMPFI (146 aa)). Mg(2+) is bound by residues aspartate 191, glutamate 195, glutamate 227, and glutamate 231. Serine 252 lines the substrate pocket.

Belongs to the ketol-acid reductoisomerase family. The cofactor is Mg(2+).

It catalyses the reaction (2R)-2,3-dihydroxy-3-methylbutanoate + NADP(+) = (2S)-2-acetolactate + NADPH + H(+). The enzyme catalyses (2R,3R)-2,3-dihydroxy-3-methylpentanoate + NADP(+) = (S)-2-ethyl-2-hydroxy-3-oxobutanoate + NADPH + H(+). It functions in the pathway amino-acid biosynthesis; L-isoleucine biosynthesis; L-isoleucine from 2-oxobutanoate: step 2/4. Its pathway is amino-acid biosynthesis; L-valine biosynthesis; L-valine from pyruvate: step 2/4. Involved in the biosynthesis of branched-chain amino acids (BCAA). Catalyzes an alkyl-migration followed by a ketol-acid reduction of (S)-2-acetolactate (S2AL) to yield (R)-2,3-dihydroxy-isovalerate. In the isomerase reaction, S2AL is rearranged via a Mg-dependent methyl migration to produce 3-hydroxy-3-methyl-2-ketobutyrate (HMKB). In the reductase reaction, this 2-ketoacid undergoes a metal-dependent reduction by NADPH to yield (R)-2,3-dihydroxy-isovalerate. The protein is Ketol-acid reductoisomerase (NADP(+)) of Sorangium cellulosum (strain So ce56) (Polyangium cellulosum (strain So ce56)).